A 419-amino-acid chain; its full sequence is L-2-hydroxyglutarate dehydrogenase, mitochondrial (419 aa).

A mitochondrion-targeting transit peptide spans 1–51 (MVPALRYLVGACGRARGGFAGDFPGASGLASGRPRPLCGGSRSASTSSFDI). N6-acetyllysine is present on residues lysine 104 and lysine 173.

This sequence belongs to the L2HGDH family. It depends on FAD as a cofactor.

The protein localises to the mitochondrion. The catalysed reaction is (S)-2-hydroxyglutarate + A = 2-oxoglutarate + AH2. In Pongo abelii (Sumatran orangutan), this protein is L-2-hydroxyglutarate dehydrogenase, mitochondrial (L2HGDH).